The sequence spans 77 residues: Sec-independent protein translocase protein TatA (77 aa).

The chain crosses the membrane as a helical span at residues 1–21 (MGGISIWQLLIIALIVVLLFG). Basic and acidic residues-rich tracts occupy residues 47–56 (EKKALEDKEA) and 65–77 (TEKKPEADKKEQA). The segment at 47–77 (EKKALEDKEAAAQTTQQATEKKPEADKKEQA) is disordered.

This sequence belongs to the TatA/E family. As to quaternary structure, the Tat system comprises two distinct complexes: a TatABC complex, containing multiple copies of TatA, TatB and TatC subunits, and a separate TatA complex, containing only TatA subunits. Substrates initially bind to the TatABC complex, which probably triggers association of the separate TatA complex to form the active translocon.

The protein resides in the cell inner membrane. In terms of biological role, part of the twin-arginine translocation (Tat) system that transports large folded proteins containing a characteristic twin-arginine motif in their signal peptide across membranes. TatA could form the protein-conducting channel of the Tat system. The polypeptide is Sec-independent protein translocase protein TatA (Shewanella amazonensis (strain ATCC BAA-1098 / SB2B)).